A 245-amino-acid polypeptide reads, in one-letter code: Derlin-1 (245 aa).

The Cytoplasmic portion of the chain corresponds to 1-17 (MDAGVWYRSLPRFTRYW). Residues 18 to 38 (LTATVVLSMLCRFDVIPLHWL) traverse the membrane as a helical segment. Residues 39–58 (HLDRSAVFSKLQLWRCMTSL) lie on the Lumenal side of the membrane. Residues 59–79 (FVFPISSNTAFHFLINCFFIV) form a helical membrane-spanning segment. Topologically, residues 80–99 (QYSSKLEKDQYSRSPADYLY) are cytoplasmic. The chain crosses the membrane as a helical span at residues 100–120 (LLIVSAVLANIGGMIFNVYFL). Residues 121 to 156 (MDTLVLAITYIWCQLNKDVTVSFWFGTRFKAMYLPW) are Lumenal-facing. A helical membrane pass occupies residues 157–177 (VLAAFEFIFHFSLASLVGIFV). Topologically, residues 178 to 245 (GHVYYFFKFQ…WGRGMTLGRN (68 aa)) are cytoplasmic. The interval 218–245 (FGLPPESRAPPRQATESPWGRGMTLGRN) is disordered.

Belongs to the derlin family.

It is found in the endoplasmic reticulum membrane. Its function is as follows. May be involved in the degradation process of specific misfolded endoplasmic reticulum (ER) luminal proteins. May also involved in endoplasmic reticulum stress-induced pre-emptive quality control, a mechanism that selectively attenuates the translocation of newly synthesized proteins into the endoplasmic reticulum and reroutes them to the cytosol for proteasomal degradation. The polypeptide is Derlin-1 (Drosophila melanogaster (Fruit fly)).